Reading from the N-terminus, the 576-residue chain is G protein-coupled receptor kinase 6 (576 aa).

Residues 1-185 (MELENIVANT…LERQPVTKNT (185 aa)) are N-terminal. In terms of domain architecture, RGS spans 53 to 171 (YHSLCERQPI…LDSIYFNRFL (119 aa)). The region spanning 186 to 448 (FRQYRVLGKG…AREVKEHPLF (263 aa)) is the Protein kinase domain. ATP-binding positions include 192–200 (LGKGGFGEV), lysine 215, and 264–270 (TLMNGGD). The active-site Proton acceptor is the aspartate 311. 315 to 318 (ENIL) is a binding site for ATP. The AGC-kinase C-terminal domain occupies 449–514 (KKLNFKRLGA…GSVSIPWQNE (66 aa)). Serine 484 is modified (phosphoserine). At threonine 485 the chain carries Phosphothreonine. S-palmitoyl cysteine attachment occurs at residues cysteine 561, cysteine 562, and cysteine 565. Serine 566 and serine 568 each carry phosphoserine.

The protein belongs to the protein kinase superfamily. AGC Ser/Thr protein kinase family. GPRK subfamily. As to quaternary structure, interacts with GIT1. As to expression, expressed in the brain in striatal neurons.

It localises to the membrane. The enzyme catalyses [G-protein-coupled receptor] + ATP = [G-protein-coupled receptor]-phosphate + ADP + H(+). Its function is as follows. Specifically phosphorylates the activated forms of G protein-coupled receptors. Such receptor phosphorylation initiates beta-arrestin-mediated receptor desensitization, internalization, and signaling events leading to their desensitization. Seems to be involved in the desensitization of D2-like dopamine receptors in striatum and chemokine receptor CXCR4 which is critical for CXCL12-induced cell chemotaxis. Phosphorylates rhodopsin (RHO) (in vitro) and a non G-protein-coupled receptor, LRP6 during Wnt signaling (in vitro). This chain is G protein-coupled receptor kinase 6 (Grk6), found in Mus musculus (Mouse).